The following is a 49-amino-acid chain: Large ribosomal subunit protein bL33A (49 aa).

The disordered stretch occupies residues 20 to 49; sequence KKNKRNNPDRVEFKKYCPRDKKSTLHRETK. Residues 25–49 show a composition bias toward basic and acidic residues; that stretch reads NNPDRVEFKKYCPRDKKSTLHRETK.

The protein belongs to the bacterial ribosomal protein bL33 family. As to quaternary structure, part of the 50S ribosomal subunit. Interacts with VmlR.

The polypeptide is Large ribosomal subunit protein bL33A (rpmGA) (Bacillus subtilis (strain 168)).